The sequence spans 143 residues: Oxoglutarate dehydrogenase inhibitor (143 aa).

Residue threonine 14 is modified to Phosphothreonine. The FHA domain occupies 68–117 (TTAGRHPESDIFLDDVTVSRRHAEFRINEGEFEVVDVGSLNGTYVNREPR).

It localises to the cytoplasm. An essential component of the PknG signaling pathway. When unphosphorylated, it inhibits the activity of 2-oxoglutarate dehydrogenase. When phosphorylated it does not inhibit 2-oxoglutarate dehydrogenase. The sequence is that of Oxoglutarate dehydrogenase inhibitor (odhI) from Corynebacterium glutamicum (strain ATCC 13032 / DSM 20300 / JCM 1318 / BCRC 11384 / CCUG 27702 / LMG 3730 / NBRC 12168 / NCIMB 10025 / NRRL B-2784 / 534).